The chain runs to 355 residues: UDP-3-O-acylglucosamine N-acyltransferase (355 aa).

The Proton acceptor role is filled by H258.

This sequence belongs to the transferase hexapeptide repeat family. LpxD subfamily. Homotrimer.

It catalyses the reaction a UDP-3-O-[(3R)-3-hydroxyacyl]-alpha-D-glucosamine + a (3R)-hydroxyacyl-[ACP] = a UDP-2-N,3-O-bis[(3R)-3-hydroxyacyl]-alpha-D-glucosamine + holo-[ACP] + H(+). The protein operates within bacterial outer membrane biogenesis; LPS lipid A biosynthesis. Its function is as follows. Catalyzes the N-acylation of UDP-3-O-acylglucosamine using 3-hydroxyacyl-ACP as the acyl donor. Is involved in the biosynthesis of lipid A, a phosphorylated glycolipid that anchors the lipopolysaccharide to the outer membrane of the cell. In Bradyrhizobium sp. (strain ORS 278), this protein is UDP-3-O-acylglucosamine N-acyltransferase.